Reading from the N-terminus, the 97-residue chain is Late transcription unit B protein (97 aa).

Residues 24-45 (SIEGETKKEHKHHYSTASKEKE) form a disordered region.

In Chlamydia trachomatis serovar D (strain ATCC VR-885 / DSM 19411 / UW-3/Cx), this protein is Late transcription unit B protein (ltuB).